The primary structure comprises 405 residues: Aurora kinase A (405 aa).

Polar residues-rich tracts occupy residues 32-82 (VPSQ…QLQA) and 91-110 (RSLN…PGNN). The tract at residues 32–127 (VPSQNPLSAN…KQKNEESKKR (96 aa)) is disordered. A phosphoserine mark is found at serine 42 and serine 52. A compositionally biased stretch (basic and acidic residues) spans 111–127 (SEKELATKQKNEESKKR). A Protein kinase domain is found at 134–384 (FEIGRPLGKG…LKDVLEHPWI (251 aa)). Residues lysine 144, lysine 163, and 212–214 (EYA) contribute to the ATP site. The active-site Proton acceptor is the aspartate 257. Lysine 259 participates in a covalent cross-link: Glycyl lysine isopeptide (Lys-Gly) (interchain with G-Cter in SUMO2). ATP-binding positions include 261–262 (EN) and aspartate 275. Residues 281–294 (HAPSSRRTTLCGTL) are activation segment. Phosphothreonine occurs at positions 288 and 289. The residue at position 343 (serine 343) is a Phosphoserine. Positions 385-405 (MANSSKPSSSQKSKDSTSKQS) are disordered. The span at 396–405 (KSKDSTSKQS) shows a compositional bias: basic and acidic residues.

Belongs to the protein kinase superfamily. Ser/Thr protein kinase family. Aurora subfamily. As to quaternary structure, part of a complex composed of NEDD9, AURKA and CTTN; within the complex NEDD9 acts as a scaffold protein and is required for complex formation. Identified in a complex with AUNIP and NIN. Interacts with FBXL7. Interacts with CPEB1, JTB, TACC1, TPX2, PPP2CA, as well as with the protein phosphatase type 1 (PP1) isoforms PPP1CA, PPP1CB and PPP1CC. Also interacts with its substrates ARHGEF2, BORA, KIF2A, PARD3, and p53/TP53. Interaction with BORA promotes phosphorylation of PLK1. Interacts with CIMAP3. Interacts with GADD45A, competing with its oligomerization. Interacts (via C-terminus) with AUNIP (via C-terminus). Interacts with FRY; this interaction facilitates AURKA-mediated PLK1 phosphorylation. Interacts with SIRT2. Interacts with MYCN; interaction is phospho-independent and triggers AURKA activation; AURKA competes with FBXW7 for binding to unphosphorylated MYCN but not for binding to phosphorylated MYCN. Interacts with HNRNPU. Interacts with AAAS. Interacts with KLHL18 and CUL3. Interacts with FOXP1. Interacts with HDAC6; AURKA-mediated phosphorylation of HDAC6 promotes deacetylation of alpha-tubulin. In terms of processing, activated by phosphorylation at Thr-289; this brings about a change in the conformation of the activation segment. Phosphorylation at Thr-289 varies during the cell cycle and is highest during M phase. Autophosphorylated at Thr-289 upon TPX2 binding. Thr-289 can be phosphorylated by several kinases, including PAK and PKA. Protein phosphatase type 1 (PP1) binds AURKA and inhibits its activity by dephosphorylating Thr-289 during mitosis. Phosphorylation at Ser-343 decreases the kinase activity. PPP2CA controls degradation by dephosphorylating Ser-52 at the end of mitosis. Ubiquitinated by the E3 ubiquitin-protein ligase complex SCF(FBXL7) during mitosis, leading to its degradation by the proteasome. Ubiquitinated by CHFR, leading to its degradation by the proteasome. Ubiquitinated by the anaphase-promoting complex (APC), leading to its degradation by the proteasome. Ubiquitinated by the CUL3-KLHL18 ligase leading to its activation at the centrosome which is required for initiating mitotic entry. Ubiquitination mediated by CUL3-KLHL18 ligase does not lead to its degradation by the proteasome.

It is found in the cytoplasm. It localises to the cytoskeleton. The protein localises to the microtubule organizing center. Its subcellular location is the centrosome. The protein resides in the spindle pole. It is found in the centriole. It localises to the cell projection. The protein localises to the neuron projection. Its subcellular location is the cilium. The protein resides in the cilium basal body. It is found in the basolateral cell membrane. It carries out the reaction L-seryl-[protein] + ATP = O-phospho-L-seryl-[protein] + ADP + H(+). It catalyses the reaction L-threonyl-[protein] + ATP = O-phospho-L-threonyl-[protein] + ADP + H(+). Its activity is regulated as follows. Activation of CDK1, appears to be an upstream event of AURKA activation. Phosphatase inhibitor-2 (PPP1R2) and TPX2 act also as activators. Inactivated by the G2 checkpoint. Inhibited by GADD45A and p53/TP53, and through dephosphorylation by protein phosphatase type 1 (PP1). MLN8054 is also a potent and selective inhibitor. Activated during the early phase of cilia disassembly in the presence of CIMAP3. Inhibited by the small molecule inhibitor VX-680. In terms of biological role, mitotic serine/threonine kinase that contributes to the regulation of cell cycle progression. Associates with the centrosome and the spindle microtubules during mitosis and plays a critical role in various mitotic events including the establishment of mitotic spindle, centrosome duplication, centrosome separation as well as maturation, chromosomal alignment, spindle assembly checkpoint, and cytokinesis. Required for normal spindle positioning during mitosis and for the localization of NUMA1 and DCTN1 to the cell cortex during metaphase. Required for initial activation of CDK1 at centrosomes. Phosphorylates numerous target proteins, including ARHGEF2, BORA, BRCA1, CDC25B, DLGP5, HDAC6, KIF2A, LATS2, NDEL1, PARD3, PPP1R2, PLK1, RASSF1, TACC3, p53/TP53 and TPX2. Phosphorylates MCRS1 which is required for MCRS1-mediated kinetochore fiber assembly and mitotic progression. Regulates KIF2A tubulin depolymerase activity. Important for microtubule formation and/or stabilization. Required for normal axon formation. Plays a role in microtubule remodeling during neurite extension. Also acts as a key regulatory component of the p53/TP53 pathway, and particularly the checkpoint-response pathways critical for oncogenic transformation of cells, by phosphorylating and destabilizing p53/TP53. Phosphorylates its own inhibitors, the protein phosphatase type 1 (PP1) isoforms, to inhibit their activity. Inhibits cilia outgrowth. Required for cilia disassembly via phosphorylation of HDAC6 and subsequent deacetylation of alpha-tubulin. Regulates protein levels of the anti-apoptosis protein BIRC5 by suppressing the expression of the SCF(FBXL7) E3 ubiquitin-protein ligase substrate adapter FBXL7 through the phosphorylation of the transcription factor FOXP1. The protein is Aurora kinase A of Canis lupus familiaris (Dog).